Reading from the N-terminus, the 761-residue chain is Probable ubiquitin carboxyl-terminal hydrolase creB (761 aa).

Positions 1-45 (MGSFLRSFRHNGGSTAPSVGAVPAKKEPQPPPMTPLEKRLLDMGP) are disordered. The span at 36 to 45 (LEKRLLDMGP) shows a compositional bias: basic and acidic residues. The 414-residue stretch at 55 to 468 (YGMENYGNTC…CAYVLFYQET (414 aa)) folds into the USP domain. Residue Cys64 is the Nucleophile of the active site. Disordered stretches follow at residues 113–146 (EAEAQAEKQKAANAQRPGMPPNPQQKPEDKDSPE) and 242–269 (PLMEKSLPAPETADSVDQSSSTGSKTPN). Residues 256–269 (SVDQSSSTGSKTPN) show a composition bias toward polar residues. The active-site Proton acceptor is His419. The interval 496–761 (LKQNGFPQSP…LRKKSFSILS (266 aa)) is disordered. The segment covering 555 to 566 (PLSPVPPVPPIP) has biased composition (pro residues). Positions 577–640 (KNDALAKREE…ASKAEEDRRL (64 aa)) form a coiled coil. Positions 580 to 649 (ALAKREEKER…LSTENGKEKQ (70 aa)) are enriched in basic and acidic residues. Positions 655–666 (RLKRGSKSLSHR) are enriched in basic residues. Positions 692-710 (SQSGPTSEQQQQQRQQSPP) are enriched in low complexity. The segment covering 712 to 722 (HDQPPNSPQPG) has biased composition (pro residues). Residues 725–743 (TIREDEQVNHKDSKHERTG) are compositionally biased toward basic and acidic residues. Positions 744-761 (HGKWRSFSLRKKSFSILS) are enriched in basic residues.

Belongs to the peptidase C19 family. As to quaternary structure, interacts with creA, creC and qutD.

The enzyme catalyses Thiol-dependent hydrolysis of ester, thioester, amide, peptide and isopeptide bonds formed by the C-terminal Gly of ubiquitin (a 76-residue protein attached to proteins as an intracellular targeting signal).. Its function is as follows. Ubiquitin thioesterase component of the regulatory network controlling carbon source utilization through ubiquitination and deubiquitination involving creA, creB, creC, creD and acrB. Deubiquitinates the creA catabolic repressor and the quinate permease qutD. Also plays a role in response to carbon starvation and the control of extracellular proteases activity. This is Probable ubiquitin carboxyl-terminal hydrolase creB (creB) from Neosartorya fischeri (strain ATCC 1020 / DSM 3700 / CBS 544.65 / FGSC A1164 / JCM 1740 / NRRL 181 / WB 181) (Aspergillus fischerianus).